A 477-amino-acid polypeptide reads, in one-letter code: Bifunctional protein HldE (477 aa).

The interval 1–320 (MKDSLPAFEK…SLSDTHHSET (320 aa)) is ribokinase. Position 195-198 (195-198 (NLHE)) interacts with ATP. Aspartate 264 is an active-site residue. Positions 346–477 (MTNGCFDILH…KIIENIMANQ (132 aa)) are cytidylyltransferase.

This sequence in the N-terminal section; belongs to the carbohydrate kinase PfkB family. The protein in the C-terminal section; belongs to the cytidylyltransferase family. As to quaternary structure, homodimer.

It catalyses the reaction D-glycero-beta-D-manno-heptose 7-phosphate + ATP = D-glycero-beta-D-manno-heptose 1,7-bisphosphate + ADP + H(+). The catalysed reaction is D-glycero-beta-D-manno-heptose 1-phosphate + ATP + H(+) = ADP-D-glycero-beta-D-manno-heptose + diphosphate. It functions in the pathway nucleotide-sugar biosynthesis; ADP-L-glycero-beta-D-manno-heptose biosynthesis; ADP-L-glycero-beta-D-manno-heptose from D-glycero-beta-D-manno-heptose 7-phosphate: step 1/4. It participates in nucleotide-sugar biosynthesis; ADP-L-glycero-beta-D-manno-heptose biosynthesis; ADP-L-glycero-beta-D-manno-heptose from D-glycero-beta-D-manno-heptose 7-phosphate: step 3/4. Functionally, catalyzes the phosphorylation of D-glycero-D-manno-heptose 7-phosphate at the C-1 position to selectively form D-glycero-beta-D-manno-heptose-1,7-bisphosphate. Its function is as follows. Catalyzes the ADP transfer from ATP to D-glycero-beta-D-manno-heptose 1-phosphate, yielding ADP-D-glycero-beta-D-manno-heptose. The polypeptide is Bifunctional protein HldE (Shewanella piezotolerans (strain WP3 / JCM 13877)).